Here is a 247-residue protein sequence, read N- to C-terminus: Probable dihydroorotate dehydrogenase B (NAD(+)), electron transfer subunit (247 aa).

An FAD-binding FR-type domain is found at 1 to 87; that stretch reads MLRRVTLKET…RGPYGNGFKE (87 aa). The [2Fe-2S] cluster site is built by cysteine 200, cysteine 205, cysteine 208, and cysteine 216.

The protein belongs to the PyrK family. In terms of assembly, heterotetramer of 2 PyrK and 2 PyrD type B subunits. It depends on [2Fe-2S] cluster as a cofactor. FAD serves as cofactor.

Its pathway is pyrimidine metabolism; UMP biosynthesis via de novo pathway; orotate from (S)-dihydroorotate (NAD(+) route): step 1/1. Responsible for channeling the electrons from the oxidation of dihydroorotate from the FMN redox center in the PyrD type B subunit to the ultimate electron acceptor NAD(+). This Pyrococcus horikoshii (strain ATCC 700860 / DSM 12428 / JCM 9974 / NBRC 100139 / OT-3) protein is Probable dihydroorotate dehydrogenase B (NAD(+)), electron transfer subunit.